We begin with the raw amino-acid sequence, 258 residues long: 3-deoxy-manno-octulosonate cytidylyltransferase (258 aa).

The protein belongs to the KdsB family.

Its subcellular location is the cytoplasm. It catalyses the reaction 3-deoxy-alpha-D-manno-oct-2-ulosonate + CTP = CMP-3-deoxy-beta-D-manno-octulosonate + diphosphate. It functions in the pathway nucleotide-sugar biosynthesis; CMP-3-deoxy-D-manno-octulosonate biosynthesis; CMP-3-deoxy-D-manno-octulosonate from 3-deoxy-D-manno-octulosonate and CTP: step 1/1. It participates in bacterial outer membrane biogenesis; lipopolysaccharide biosynthesis. Its function is as follows. Activates KDO (a required 8-carbon sugar) for incorporation into bacterial lipopolysaccharide in Gram-negative bacteria. This Gemmatimonas aurantiaca (strain DSM 14586 / JCM 11422 / NBRC 100505 / T-27) protein is 3-deoxy-manno-octulosonate cytidylyltransferase.